We begin with the raw amino-acid sequence, 133 residues long: MSGSMEGNAVSFKGGVFSPYLTTRLPAWAGVRQNVMGSNVDGRPVAPANSATLTYATVGSSVDTAAAAAASAAASTARGMAADFGLYNQLAASRSLREEDALSVVLTRMEELSQQLQDLFAKVALLNPPANAS.

Positions 97 to 127 form a coiled coil; it reads REEDALSVVLTRMEELSQQLQDLFAKVALLN.

This sequence belongs to the adenoviridae hexon-interlacing protein family. As to quaternary structure, homotrimer. Interacts with hexon protein; this interaction tethers the hexons together. Self-interacts with adjacent proteins. Interacts with kinesin light chain KLC1; this interaction leads to capsid disruption at the nuclear pore complex during virus entry into host cell.

It is found in the virion. The protein resides in the host nucleus. Its function is as follows. Structural component of the virion that acts as a cement protein on the capsid exterior and forms triskelion structures consisting of three molecules that stabilize three hexon trimers at the center of each icosahedral facet and fixes the peripentonal hexons. Dispensable for assembly. During virus entry, recruits the anterograde motor kinesin-1 to the capsid docked at the nuclear pore complex thereby subjecting the docked capsid to a pulling force. The resulting tension leads to capsid disruption, dispersion of capsid fragments toward cell periphery and eventually viral DNA entry into the host nucleus. The sequence is that of Hexon-interlacing protein from Homo sapiens (Human).